We begin with the raw amino-acid sequence, 269 residues long: Phosphate import ATP-binding protein PstB (269 aa).

The ABC transporter domain occupies S21–I264. G53–S60 contacts ATP.

The protein belongs to the ABC transporter superfamily. Phosphate importer (TC 3.A.1.7) family. As to quaternary structure, the complex is composed of two ATP-binding proteins (PstB), two transmembrane proteins (PstC and PstA) and a solute-binding protein (PstS).

The protein resides in the cell inner membrane. The catalysed reaction is phosphate(out) + ATP + H2O = ADP + 2 phosphate(in) + H(+). Its function is as follows. Part of the ABC transporter complex PstSACB involved in phosphate import. Responsible for energy coupling to the transport system. The sequence is that of Phosphate import ATP-binding protein PstB from Nitrosospira multiformis (strain ATCC 25196 / NCIMB 11849 / C 71).